Consider the following 423-residue polypeptide: Glutamate-1-semialdehyde 2,1-aminomutase (423 aa).

Lys-263 is modified (N6-(pyridoxal phosphate)lysine).

It belongs to the class-III pyridoxal-phosphate-dependent aminotransferase family. HemL subfamily. Pyridoxal 5'-phosphate is required as a cofactor.

Its subcellular location is the cytoplasm. The catalysed reaction is (S)-4-amino-5-oxopentanoate = 5-aminolevulinate. It participates in porphyrin-containing compound metabolism; protoporphyrin-IX biosynthesis; 5-aminolevulinate from L-glutamyl-tRNA(Glu): step 2/2. The polypeptide is Glutamate-1-semialdehyde 2,1-aminomutase (Ignicoccus hospitalis (strain KIN4/I / DSM 18386 / JCM 14125)).